The chain runs to 269 residues: 5'-nucleotidase SurE (269 aa).

A divalent metal cation-binding residues include Asp11, Asp12, Ser42, and Asn90.

It belongs to the SurE nucleotidase family. A divalent metal cation serves as cofactor.

The protein localises to the cytoplasm. It carries out the reaction a ribonucleoside 5'-phosphate + H2O = a ribonucleoside + phosphate. Its function is as follows. Nucleotidase that shows phosphatase activity on nucleoside 5'-monophosphates. In Haloarcula marismortui (strain ATCC 43049 / DSM 3752 / JCM 8966 / VKM B-1809) (Halobacterium marismortui), this protein is 5'-nucleotidase SurE.